A 369-amino-acid chain; its full sequence is tRNA 2-selenouridine synthase (369 aa).

The 124-residue stretch at Phe15 to Glu138 folds into the Rhodanese domain. The S-selanylcysteine intermediate role is filled by Cys98.

Belongs to the SelU family. As to quaternary structure, monomer.

It carries out the reaction 5-methylaminomethyl-2-thiouridine(34) in tRNA + selenophosphate + (2E)-geranyl diphosphate + H2O + H(+) = 5-methylaminomethyl-2-selenouridine(34) in tRNA + (2E)-thiogeraniol + phosphate + diphosphate. The enzyme catalyses 5-methylaminomethyl-2-thiouridine(34) in tRNA + (2E)-geranyl diphosphate = 5-methylaminomethyl-S-(2E)-geranyl-thiouridine(34) in tRNA + diphosphate. It catalyses the reaction 5-methylaminomethyl-S-(2E)-geranyl-thiouridine(34) in tRNA + selenophosphate + H(+) = 5-methylaminomethyl-2-(Se-phospho)selenouridine(34) in tRNA + (2E)-thiogeraniol. The catalysed reaction is 5-methylaminomethyl-2-(Se-phospho)selenouridine(34) in tRNA + H2O = 5-methylaminomethyl-2-selenouridine(34) in tRNA + phosphate. Its function is as follows. Involved in the post-transcriptional modification of the uridine at the wobble position (U34) of tRNA(Lys), tRNA(Glu) and tRNA(Gln). Catalyzes the conversion of 2-thiouridine (S2U-RNA) to 2-selenouridine (Se2U-RNA). Acts in a two-step process involving geranylation of 2-thiouridine (S2U) to S-geranyl-2-thiouridine (geS2U) and subsequent selenation of the latter derivative to 2-selenouridine (Se2U) in the tRNA chain. This chain is tRNA 2-selenouridine synthase, found in Shewanella sp. (strain W3-18-1).